The chain runs to 444 residues: Tubulin beta chain (444 aa).

Residues Met1 to Ile4 carry the MREI motif motif. GTP is bound by residues Gln11, Glu69, Ser138, Gly142, Thr143, Gly144, Asn204, and Asn226. Mg(2+) is bound at residue Glu69. Positions Glu421–Ala444 are disordered. Positions Thr429–Ala444 are enriched in acidic residues. Glu438 carries the 5-glutamyl polyglutamate modification.

This sequence belongs to the tubulin family. Dimer of alpha and beta chains. A typical microtubule is a hollow water-filled tube with an outer diameter of 25 nm and an inner diameter of 15 nM. Alpha-beta heterodimers associate head-to-tail to form protofilaments running lengthwise along the microtubule wall with the beta-tubulin subunit facing the microtubule plus end conferring a structural polarity. Microtubules usually have 13 protofilaments but different protofilament numbers can be found in some organisms and specialized cells. Requires Mg(2+) as cofactor. In terms of processing, some glutamate residues at the C-terminus are polyglycylated, resulting in polyglycine chains on the gamma-carboxyl group. Glycylation is mainly limited to tubulin incorporated into axonemes (cilia and flagella) whereas glutamylation is prevalent in neuronal cells, centrioles, axonemes, and the mitotic spindle. Both modifications can coexist on the same protein on adjacent residues, and lowering polyglycylation levels increases polyglutamylation, and reciprocally. The precise function of polyglycylation is still unclear. Some glutamate residues at the C-terminus are polyglutamylated, resulting in polyglutamate chains on the gamma-carboxyl group. Polyglutamylation plays a key role in microtubule severing by spastin (SPAST). SPAST preferentially recognizes and acts on microtubules decorated with short polyglutamate tails: severing activity by SPAST increases as the number of glutamates per tubulin rises from one to eight, but decreases beyond this glutamylation threshold.

Its subcellular location is the cytoplasm. The protein resides in the cytoskeleton. Its function is as follows. Tubulin is the major constituent of microtubules, a cylinder consisting of laterally associated linear protofilaments composed of alpha- and beta-tubulin heterodimers. Microtubules grow by the addition of GTP-tubulin dimers to the microtubule end, where a stabilizing cap forms. Below the cap, tubulin dimers are in GDP-bound state, owing to GTPase activity of alpha-tubulin. The protein is Tubulin beta chain (tubb) of Xenopus laevis (African clawed frog).